A 212-amino-acid polypeptide reads, in one-letter code: Prolactin (212 aa).

The N-terminal stretch at 1 to 24 (MAHRETNGSKLFITVLCMVAACSA) is a signal peptide. 2 cysteine pairs are disulfide-bonded: Cys-70/Cys-185 and Cys-202/Cys-212.

It belongs to the somatotropin/prolactin family.

Its subcellular location is the secreted. The chain is Prolactin (prl) from Sparus aurata (Gilthead sea bream).